Consider the following 325-residue polypeptide: Hydroxymethylglutaryl-CoA lyase, mitochondrial (325 aa).

Residues 1-27 (MAAMRKAVPRRLVGLASLRAVSTSSMG) constitute a mitochondrion transit peptide. Residues 33–300 (VKIVEVGPRD…HTGVNLQKLL (268 aa)) form the Pyruvate carboxyltransferase domain. Arg41 provides a ligand contact to substrate. Asp42 lines the a divalent metal cation pocket. Lys48 carries the N6-acetyllysine; alternate modification. At Lys48 the chain carries N6-succinyllysine; alternate. The residue at position 111 (Lys111) is an N6-acetyllysine. An N6-acetyllysine; alternate mark is found at Lys137 and Lys179. N6-succinyllysine; alternate occurs at positions 137 and 179. His233 and His235 together coordinate a divalent metal cation. Residue Cys266 is part of the active site. An a divalent metal cation-binding site is contributed by Asn275. Residues 323 to 325 (CKL) carry the Microbody targeting signal motif. Lys324 is modified (N6-acetyllysine).

It belongs to the HMG-CoA lyase family. Homodimer; disulfide-linked. Can also form homotetramers.

The protein resides in the mitochondrion matrix. Its subcellular location is the peroxisome. It carries out the reaction (3S)-3-hydroxy-3-methylglutaryl-CoA = acetoacetate + acetyl-CoA. It functions in the pathway metabolic intermediate metabolism; (S)-3-hydroxy-3-methylglutaryl-CoA degradation; acetoacetate from (S)-3-hydroxy-3-methylglutaryl-CoA: step 1/1. Mitochondrial 3-hydroxy-3-methylglutaryl-CoA lyase that catalyzes a cation-dependent cleavage of (S)-3-hydroxy-3-methylglutaryl-CoA into acetyl-CoA and acetoacetate, a key step in ketogenesis. Terminal step in leucine catabolism. Ketone bodies (beta-hydroxybutyrate, acetoacetate and acetone) are essential as an alternative source of energy to glucose, as lipid precursors and as regulators of metabolism. The sequence is that of Hydroxymethylglutaryl-CoA lyase, mitochondrial (HMGCL) from Pongo abelii (Sumatran orangutan).